A 270-amino-acid chain; its full sequence is Tryptophan synthase alpha chain (270 aa).

Catalysis depends on proton acceptor residues glutamate 49 and aspartate 60.

This sequence belongs to the TrpA family. As to quaternary structure, tetramer of two alpha and two beta chains.

The catalysed reaction is (1S,2R)-1-C-(indol-3-yl)glycerol 3-phosphate + L-serine = D-glyceraldehyde 3-phosphate + L-tryptophan + H2O. It functions in the pathway amino-acid biosynthesis; L-tryptophan biosynthesis; L-tryptophan from chorismate: step 5/5. The alpha subunit is responsible for the aldol cleavage of indoleglycerol phosphate to indole and glyceraldehyde 3-phosphate. The protein is Tryptophan synthase alpha chain of Buchnera aphidicola subsp. Melaphis rhois.